Consider the following 534-residue polypeptide: NAD(P)H-quinone oxidoreductase chain 4 (534 aa).

Helical transmembrane passes span 6-26, 38-58, 91-111, 117-137, 138-158, 171-191, 214-234, 245-265, 279-299, 316-336, 337-357, 377-399, 419-439, and 466-486; these read FPWL…LPFI, WYAL…FYTQ, MPLI…SWPV, LFYF…AVQD, LLVF…LLSI, FILY…AMAF, LLCY…VPLH, TAPV…YALI, FAPA…LTSF, MGFV…GAVL, QMVS…ATYD, IFAM…GFVA, VPVV…LLSM, and IFVI…PKII.

This sequence belongs to the complex I subunit 4 family.

The protein localises to the cellular thylakoid membrane. It carries out the reaction a plastoquinone + NADH + (n+1) H(+)(in) = a plastoquinol + NAD(+) + n H(+)(out). The enzyme catalyses a plastoquinone + NADPH + (n+1) H(+)(in) = a plastoquinol + NADP(+) + n H(+)(out). Its function is as follows. NDH-1 shuttles electrons from NAD(P)H, via FMN and iron-sulfur (Fe-S) centers, to quinones in the respiratory chain. The immediate electron acceptor for the enzyme in this species is believed to be plastoquinone. Couples the redox reaction to proton translocation (for every two electrons transferred, four hydrogen ions are translocated across the cytoplasmic membrane), and thus conserves the redox energy in a proton gradient. In Acaryochloris marina (strain MBIC 11017), this protein is NAD(P)H-quinone oxidoreductase chain 4.